The chain runs to 587 residues: Aspartate--tRNA(Asp/Asn) ligase (587 aa).

Residue glutamate 173 coordinates L-aspartate. The interval 197–200 (QLFK) is aspartate. An L-aspartate-binding site is contributed by arginine 219. Residues 219–221 (RDE) and glutamine 228 contribute to the ATP site. Histidine 448 provides a ligand contact to L-aspartate. Residue glutamate 481 coordinates ATP. Arginine 488 lines the L-aspartate pocket. 533-536 (GLDR) serves as a coordination point for ATP.

The protein belongs to the class-II aminoacyl-tRNA synthetase family. Type 1 subfamily. Homodimer.

It localises to the cytoplasm. The enzyme catalyses tRNA(Asx) + L-aspartate + ATP = L-aspartyl-tRNA(Asx) + AMP + diphosphate. In terms of biological role, aspartyl-tRNA synthetase with relaxed tRNA specificity since it is able to aspartylate not only its cognate tRNA(Asp) but also tRNA(Asn). Reaction proceeds in two steps: L-aspartate is first activated by ATP to form Asp-AMP and then transferred to the acceptor end of tRNA(Asp/Asn). This Alcanivorax borkumensis (strain ATCC 700651 / DSM 11573 / NCIMB 13689 / SK2) protein is Aspartate--tRNA(Asp/Asn) ligase.